We begin with the raw amino-acid sequence, 461 residues long: Bifunctional protein GlmU (461 aa).

The interval methionine 1–arginine 235 is pyrophosphorylase. UDP-N-acetyl-alpha-D-glucosamine-binding positions include leucine 6–glycine 9, lysine 20, glutamine 71, and glycine 77–threonine 78. Aspartate 102 lines the Mg(2+) pocket. Glycine 145, glutamate 160, asparagine 175, and asparagine 233 together coordinate UDP-N-acetyl-alpha-D-glucosamine. Residue asparagine 233 participates in Mg(2+) binding. The interval tryptophan 236–serine 256 is linker. The N-acetyltransferase stretch occupies residues glycine 257 to glutamate 461. UDP-N-acetyl-alpha-D-glucosamine contacts are provided by arginine 339 and lysine 357. Histidine 369 serves as the catalytic Proton acceptor. Residues tyrosine 372 and asparagine 383 each coordinate UDP-N-acetyl-alpha-D-glucosamine. Residues alanine 386, serine 411, glycine 429, and arginine 446 each contribute to the acetyl-CoA site.

This sequence in the N-terminal section; belongs to the N-acetylglucosamine-1-phosphate uridyltransferase family. In the C-terminal section; belongs to the transferase hexapeptide repeat family. As to quaternary structure, homotrimer. Mg(2+) is required as a cofactor.

Its subcellular location is the cytoplasm. The enzyme catalyses alpha-D-glucosamine 1-phosphate + acetyl-CoA = N-acetyl-alpha-D-glucosamine 1-phosphate + CoA + H(+). It carries out the reaction N-acetyl-alpha-D-glucosamine 1-phosphate + UTP + H(+) = UDP-N-acetyl-alpha-D-glucosamine + diphosphate. It functions in the pathway nucleotide-sugar biosynthesis; UDP-N-acetyl-alpha-D-glucosamine biosynthesis; N-acetyl-alpha-D-glucosamine 1-phosphate from alpha-D-glucosamine 6-phosphate (route II): step 2/2. The protein operates within nucleotide-sugar biosynthesis; UDP-N-acetyl-alpha-D-glucosamine biosynthesis; UDP-N-acetyl-alpha-D-glucosamine from N-acetyl-alpha-D-glucosamine 1-phosphate: step 1/1. It participates in bacterial outer membrane biogenesis; LPS lipid A biosynthesis. In terms of biological role, catalyzes the last two sequential reactions in the de novo biosynthetic pathway for UDP-N-acetylglucosamine (UDP-GlcNAc). The C-terminal domain catalyzes the transfer of acetyl group from acetyl coenzyme A to glucosamine-1-phosphate (GlcN-1-P) to produce N-acetylglucosamine-1-phosphate (GlcNAc-1-P), which is converted into UDP-GlcNAc by the transfer of uridine 5-monophosphate (from uridine 5-triphosphate), a reaction catalyzed by the N-terminal domain. This is Bifunctional protein GlmU from Hydrogenobaculum sp. (strain Y04AAS1).